A 346-amino-acid polypeptide reads, in one-letter code: Putative isoaspartyl peptidase/L-asparaginase (346 aa).

The Nucleophile role is filled by Thr207. Substrate contacts are provided by residues Arg235–Asp238 and Thr257–Gly260.

It belongs to the Ntn-hydrolases family. Heterodimer of an alpha and beta chain produced by autocleavage. In terms of processing, cleaved into an alpha and beta chain by autocatalysis; this activates the enzyme. The N-terminal residue of the beta subunit is responsible for the nucleophile hydrolase activity.

The catalysed reaction is Cleavage of a beta-linked Asp residue from the N-terminus of a polypeptide.. It carries out the reaction L-asparagine + H2O = L-aspartate + NH4(+). Has both L-asparaginase and beta-aspartyl peptidase activity. Does not have aspartylglucosaminidase activity and is inactive toward GlcNAc-L-Asn. Likewise, has no activity toward glutamine. The protein is Putative isoaspartyl peptidase/L-asparaginase of Dictyostelium discoideum (Social amoeba).